Reading from the N-terminus, the 879-residue chain is Leucine--tRNA ligase (879 aa).

The short motif at 46-56 (PYPSGALHMGH) is the 'HIGH' region element. Residues 638–642 (KMSKS) carry the 'KMSKS' region motif. K641 is a binding site for ATP.

It belongs to the class-I aminoacyl-tRNA synthetase family.

The protein localises to the cytoplasm. The enzyme catalyses tRNA(Leu) + L-leucine + ATP = L-leucyl-tRNA(Leu) + AMP + diphosphate. This is Leucine--tRNA ligase from Xanthomonas campestris pv. campestris (strain 8004).